A 1443-amino-acid chain; its full sequence is Cleavage and polyadenylation specificity factor subunit 1 (1443 aa).

Disordered regions lie at residues 404 to 435 (PASAVREAADKEEPPSKKKRVDATAGWSAAGK), 546 to 570 (EEDNPKGEGTEQEPSTTPEADDDGR), 715 to 777 (GGAR…PAPF), and 901 to 921 (FREKKPKPSKKKAEGGGAEEG). A compositionally biased stretch (basic and acidic residues) spans 410-419 (EAADKEEPPS). 2 positions are modified to phosphoserine: Ser-756 and Ser-766. The segment covering 758–775 (SKEEARRSSQPPADRDPA) has biased composition (basic and acidic residues). Positions 893 to 908 (KKVPHNINFREKKPKP) match the Nuclear localization signal motif.

Belongs to the CPSF1 family. In terms of assembly, component of the cleavage and polyadenylation specificity factor (CPSF) complex, composed of CPSF1, CPSF2, CPSF3, CPSF4 and FIP1L1. Found in a complex with CPSF1, FIP1L1 and PAPOLA. Interacts with FIP1L1, TENT2/GLD2 and SRRM1. Interacts with TUT1; the interaction is direct and mediates the recruitment of the CPSF complex on the 3'UTR of selected pre-mRNAs. The N-terminus is blocked. In terms of tissue distribution, widely expressed, with high expression in the retina.

Its subcellular location is the nucleus. The protein localises to the nucleoplasm. Its function is as follows. Component of the cleavage and polyadenylation specificity factor (CPSF) complex that plays a key role in pre-mRNA 3'-end formation, recognizing the AAUAAA signal sequence and interacting with poly(A) polymerase and other factors to bring about cleavage and poly(A) addition. This subunit is involved in the RNA recognition step of the polyadenylation reaction. May play a role in eye morphogenesis and the development of retinal ganglion cell projections to the midbrain. The chain is Cleavage and polyadenylation specificity factor subunit 1 (CPSF1) from Homo sapiens (Human).